Consider the following 206-residue polypeptide: A-type ATP synthase subunit E (206 aa).

Belongs to the V-ATPase E subunit family. In terms of assembly, has multiple subunits with at least A(3), B(3), C, D, E, F, H, I and proteolipid K(x).

The protein localises to the cell membrane. In terms of biological role, component of the A-type ATP synthase that produces ATP from ADP in the presence of a proton gradient across the membrane. The chain is A-type ATP synthase subunit E from Methanothermobacter thermautotrophicus (strain ATCC 29096 / DSM 1053 / JCM 10044 / NBRC 100330 / Delta H) (Methanobacterium thermoautotrophicum).